Consider the following 397-residue polypeptide: CCA-adding enzyme (397 aa).

ATP contacts are provided by glycine 26 and arginine 29. 2 residues coordinate CTP: glycine 26 and arginine 29. Mg(2+) contacts are provided by aspartate 39 and aspartate 41. 5 residues coordinate ATP: arginine 110, aspartate 153, arginine 156, arginine 159, and arginine 162. Arginine 110, aspartate 153, arginine 156, arginine 159, and arginine 162 together coordinate CTP.

It belongs to the tRNA nucleotidyltransferase/poly(A) polymerase family. Bacterial CCA-adding enzyme type 3 subfamily. Homodimer. Mg(2+) is required as a cofactor.

It carries out the reaction a tRNA precursor + 2 CTP + ATP = a tRNA with a 3' CCA end + 3 diphosphate. It catalyses the reaction a tRNA with a 3' CCA end + 2 CTP + ATP = a tRNA with a 3' CCACCA end + 3 diphosphate. Its function is as follows. Catalyzes the addition and repair of the essential 3'-terminal CCA sequence in tRNAs without using a nucleic acid template. Adds these three nucleotides in the order of C, C, and A to the tRNA nucleotide-73, using CTP and ATP as substrates and producing inorganic pyrophosphate. tRNA 3'-terminal CCA addition is required both for tRNA processing and repair. Also involved in tRNA surveillance by mediating tandem CCA addition to generate a CCACCA at the 3' terminus of unstable tRNAs. While stable tRNAs receive only 3'-terminal CCA, unstable tRNAs are marked with CCACCA and rapidly degraded. This chain is CCA-adding enzyme, found in Bacillus cereus (strain ZK / E33L).